The following is a 538-amino-acid chain: Retinoblastoma-binding protein 5 (538 aa).

WD repeat units lie at residues 22–63 and 64–103; these read DCIS…KIIS and AHIH…CDQR. Lys-129 is covalently cross-linked (Glycyl lysine isopeptide (Lys-Gly) (interchain with G-Cter in SUMO2)). WD repeat units follow at residues 148–188, 196–235, 249–291, and 293–331; these read DDDS…LVAS, SNTT…TCGR, VNRT…KILH, and TRGE…NWSA. Residue Thr-252 is modified to Phosphothreonine; by CDK1. The segment at 330–366 is interaction with ASH2L; sequence SAFAPDFKELDENVEYEERESEFDIEDEDKSEPEQTG. Positions 344 to 360 are enriched in acidic residues; the sequence is EYEERESEFDIEDEDKS. Residues 344-377 form a disordered region; the sequence is EYEERESEFDIEDEDKSEPEQTGADAAEDEEVDV. A Phosphoserine modification is found at Ser-350. The tract at residues 371–380 is interaction with WDR5; that stretch reads EDEEVDVTSV. 2 positions are modified to phosphoserine: Ser-388 and Ser-389. A disordered region spans residues 408–519; it reads VEDPEENPYG…LPLEGSTKGK (112 aa). Over residues 479 to 490 the composition is skewed to basic residues; the sequence is SKKKQAGRPKGS. A compositionally biased stretch (basic and acidic residues) spans 491–510; sequence KGKEKDSPFKPKLYKGDRGL. Ser-497 carries the post-translational modification Phosphoserine; by CDK1. Ser-525 is subject to Phosphoserine.

Component of the SET1 complex, at least composed of the catalytic subunit (SETD1A or SETD1B), WDR5, WDR82, RBBP5, ASH2L/ASH2, CXXC1/CFP1, HCFC1 and DPY30. Core component of several methyltransferase-containing complexes including MLL1/MLL, MLL2/3 (also named ASCOM complex) and MLL4/WBP7. Each complex is at least composed of ASH2L, RBBP5, WDR5, DPY30, one or more specific histone methyltransferases (KMT2A/MLL1, KMT2D/MLL2, KMT2C/MLL3 and KMT2B/MLL4), and the facultative components PAGR1, BACC1, CHD8, E2F6, HCFC1, HCFC2, HSP70, INO80C, KDM6A, KANSL1, LAS1L, MAX, MCRS1, MEN1, MGA, MYST1/MOF, NCOA6, PAXIP1/PTIP, PELP1, PHF20, PRP31, RING2, RUVB1/TIP49A, RUVB2/TIP49B, SENP3, TAF1, TAF4, TAF6, TAF7, TAF9, TEX10 and alpha- and beta-tubulin. Component of a histone methylation complex composed of at least ZNF335, RBBP5, ASH2L and WDR5; the complex may have histone H3-specific methyltransferase activity, however does not have specificity for 'Lys-4' of histone H3. Interacts with ZNF335. Interacts with ASH2L; the interaction is direct. Interacts with WDR5; the interaction is direct. Components of the ZNF335-RBBP5-ASH2L-WDR5 histone methylation complex may associate with components of a nuclear receptor-mediated transcription complex to form a complex at least composed of ZNF335, HCFC1, CCAR2, EMSY, MKI67, RBBP5, ASH2L and WDR5. Within this complex interacts with EMSY. Found in a complex with RBBP5, ASH2L, DPY30, KMT2A, KMT2D and WDR5. Interacts with SETD1A. Interacts with WDR82.

The protein resides in the nucleus. Its function is as follows. In embryonic stem (ES) cells, plays a crucial role in the differentiation potential, particularly along the neural lineage, regulating gene induction and H3 'Lys-4' methylation at key developmental loci, including that mediated by retinoic acid. Does not affect ES cell self-renewal. Component or associated component of some histone methyltransferase complexes which regulates transcription through recruitment of those complexes to gene promoters. As part of the MLL1/MLL complex, involved in mono-, di- and trimethylation at 'Lys-4' of histone H3. Histone H3 'Lys-4' methylation represents a specific tag for epigenetic transcriptional activation. In association with ASH2L and WDR5, stimulates the histone methyltransferase activities of KMT2A, KMT2B, KMT2C, KMT2D, SETD1A and SETD1B. The polypeptide is Retinoblastoma-binding protein 5 (Rbbp5) (Mus musculus (Mouse)).